Reading from the N-terminus, the 427-residue chain is Glutamate-1-semialdehyde 2,1-aminomutase (427 aa).

K265 is subject to N6-(pyridoxal phosphate)lysine.

This sequence belongs to the class-III pyridoxal-phosphate-dependent aminotransferase family. HemL subfamily. As to quaternary structure, homodimer. Pyridoxal 5'-phosphate is required as a cofactor.

It is found in the cytoplasm. It catalyses the reaction (S)-4-amino-5-oxopentanoate = 5-aminolevulinate. The protein operates within porphyrin-containing compound metabolism; protoporphyrin-IX biosynthesis; 5-aminolevulinate from L-glutamyl-tRNA(Glu): step 2/2. In Actinobacillus succinogenes (strain ATCC 55618 / DSM 22257 / CCUG 43843 / 130Z), this protein is Glutamate-1-semialdehyde 2,1-aminomutase.